The chain runs to 499 residues: U4/U6 small nuclear ribonucleoprotein Prp31 (499 aa).

The segment at 1–37 (MSLADELLADLEEAAEEEEGGSYGEEEEEPAIEDVQE) is disordered. The span at 7–37 (LLADLEEAAEEEEGGSYGEEEEEPAIEDVQE) shows a compositional bias: acidic residues. Coiled-coil stretches lie at residues 85-120 (EAAP…KYSK) and 181-215 (EEEL…MSFI). A Nop domain is found at 215-333 (IAPNLSIIIG…IERKFDKWQE (119 aa)). A disordered region spans residues 334-357 (PPPVKQVKPLPAPLDGQRKKRGGR). The Nuclear localization signal (NLS) signature appears at 351–364 (RKKRGGRRYRKMKE). Ser-379, Ser-395, and Ser-432 each carry phosphoserine. Lys-438 is modified (N6-acetyllysine). Ser-439 bears the Phosphoserine mark. Thr-440 is subject to Phosphothreonine. Phosphoserine is present on Ser-450. Residue Thr-455 is modified to Phosphothreonine. Residues Lys-471 and Lys-478 each participate in a glycyl lysine isopeptide (Lys-Gly) (interchain with G-Cter in SUMO2) cross-link.

This sequence belongs to the PRP31 family. As to quaternary structure, identified in the spliceosome B complex. Component of the U4/U6-U5 tri-snRNP complex composed of the U4, U6 and U5 snRNAs and at least PRPF3, PRPF4, PRPF6, PRPF8, PRPF31, SNRNP200, TXNL4A, SNRNP40, DDX23, CD2BP2, PPIH, SNU13, EFTUD2, SART1 and USP39. Interacts with a complex formed by SNU13 and U4 snRNA, but not with SNU13 or U4 snRNA alone. The complex formed by SNU13 and PRPF31 also binds U4atac snRNA, a characteristic component of specific, less abundant spliceosomal complexes. Interacts with PRPF6/U5 snRNP-associated 102 kDa protein. Component of some MLL1/MLL complex, at least composed of the core components KMT2A/MLL1, ASH2L, HCFC1/HCF1, WDR5 and RBBP5, as well as the facultative components BACC1, CHD8, E2F6, HSP70, INO80C, KANSL1, LAS1L, MAX, MCRS1, MGA, KAT8/MOF, PELP1, PHF20, PRP31, RING2, RUVB1/TIP49A, RUVB2/TIP49B, SENP3, TAF1, TAF4, TAF6, TAF7, TAF9 and TEX10. Interacts (via its NLS) with CTNNBL1. Interacts with USH1G. In terms of processing, phosphorylated by PRP4K during spliceosome assembly. As to expression, ubiquitously expressed.

Its subcellular location is the nucleus. The protein resides in the nucleus speckle. It is found in the cajal body. Functionally, involved in pre-mRNA splicing as component of the spliceosome. Required for the assembly of the U4/U5/U6 tri-snRNP complex, one of the building blocks of the spliceosome. The sequence is that of U4/U6 small nuclear ribonucleoprotein Prp31 from Homo sapiens (Human).